An 856-amino-acid polypeptide reads, in one-letter code: MNVIDTDDLEKHTPMMRQYLTMKAEHHDMLLFYRMGDFYELFYDDAKRASELLGISLTARGKSGGDPIPMAGLPYHAVEGYLAKLVQIGQSVAICEQIGDPATSKGPVERKVVRIVTPGTLTDEALLQERQDNLLAAVYQGKIGFGYATLDVSSGRFVIAELDTRESLEAELQRTNPVEILYSEDFGELGLLNGFKGKRRRPEWEFDYDTSIKLLLAQFGTKDLHGFGIADARLSLQAAGCLMQYVKDTQRTALPHINAITRFNQTDSIVLDAATRRNLELTQNLAGGRDNTLAAVLDNTATPMGSRMLQRWIHQPLRDPKHIKARQQAVTELLDTAAHEGLHEQLKALGDIERIMARLALRTARPRDFARLRQALGLLPELQQSLSTLSAPHTTQLRQHLGEFPAEQALLERAIVDNPPMLIRDGGVIREGYNSELDEWRGLSEGASDYLVQLEAREKERTGINTLKVGYNRVHGYYIEVSRLQSSQVPLNYQRRQTLKNMERYITPELKEYEEKVLSSQGKALALEKQLWEQLFDLILPKLHELQAFARAAAELDVLSNFAERAETLGYTCPELSQDIGVQIEAGRHPVVERVSQTPFIANPVTLHNQRRMLIVTGPNMGGKSTYMRQVALITLMAHIGCFVPADCALIGPIDRIFTRIGASDDLASGRSTFMVEMTETANILHNATASSLVLMDEIGRGTSTYDGLSLAWSAAEYLAQQVGAMTLFATHYFELTQLPELMAGVYNVHLDAIEHDDTIAFMHAVQEGAASKSYGLQVAALAGVPNKVIKAAKHKLQQLESRDHQAEGTRTPIQSLLALPEPVENPALTKLSSINPDNLTPKQALDLLYELKRLS.

618 to 625 (GPNMGGKS) serves as a coordination point for ATP.

This sequence belongs to the DNA mismatch repair MutS family.

In terms of biological role, this protein is involved in the repair of mismatches in DNA. It is possible that it carries out the mismatch recognition step. This protein has a weak ATPase activity. The polypeptide is DNA mismatch repair protein MutS (Shewanella baltica (strain OS223)).